Reading from the N-terminus, the 521-residue chain is Bifunctional purine biosynthesis protein PurH (521 aa).

The MGS-like domain occupies 1–145 (MIKQALISVS…KNHRDVTVVV (145 aa)).

This sequence belongs to the PurH family.

It carries out the reaction (6R)-10-formyltetrahydrofolate + 5-amino-1-(5-phospho-beta-D-ribosyl)imidazole-4-carboxamide = 5-formamido-1-(5-phospho-D-ribosyl)imidazole-4-carboxamide + (6S)-5,6,7,8-tetrahydrofolate. The enzyme catalyses IMP + H2O = 5-formamido-1-(5-phospho-D-ribosyl)imidazole-4-carboxamide. It participates in purine metabolism; IMP biosynthesis via de novo pathway; 5-formamido-1-(5-phospho-D-ribosyl)imidazole-4-carboxamide from 5-amino-1-(5-phospho-D-ribosyl)imidazole-4-carboxamide (10-formyl THF route): step 1/1. The protein operates within purine metabolism; IMP biosynthesis via de novo pathway; IMP from 5-formamido-1-(5-phospho-D-ribosyl)imidazole-4-carboxamide: step 1/1. The chain is Bifunctional purine biosynthesis protein PurH from Burkholderia ambifaria (strain MC40-6).